A 185-amino-acid polypeptide reads, in one-letter code: HTH-type transcriptional regulator SA2364 (185 aa).

The region spanning Lys6–Phe66 is the HTH tetR-type domain. The segment at residues Ser29–Phe48 is a DNA-binding region (H-T-H motif).

The polypeptide is HTH-type transcriptional regulator SA2364 (Staphylococcus aureus (strain N315)).